The primary structure comprises 156 residues: Small ribosomal subunit protein uS7 (156 aa).

It belongs to the universal ribosomal protein uS7 family. Part of the 30S ribosomal subunit. Contacts proteins S9 and S11.

One of the primary rRNA binding proteins, it binds directly to 16S rRNA where it nucleates assembly of the head domain of the 30S subunit. Is located at the subunit interface close to the decoding center, probably blocks exit of the E-site tRNA. In Rippkaea orientalis (strain PCC 8801 / RF-1) (Cyanothece sp. (strain PCC 8801)), this protein is Small ribosomal subunit protein uS7.